A 202-amino-acid chain; its full sequence is Small ribosomal subunit protein uS4 (202 aa).

The segment covering 1–13 (MSRYRGPRLRVTR) has biased composition (basic residues). The segment at 1–42 (MSRYRGPRLRVTRRLGELPGLTRKASKKSNPPGQHGQARRKR) is disordered. Residues 90 to 152 (NRLDNVCFRL…KASKKLVEGN (63 aa)) form the S4 RNA-binding domain.

The protein belongs to the universal ribosomal protein uS4 family. In terms of assembly, part of the 30S ribosomal subunit. Contacts protein S5. The interaction surface between S4 and S5 is involved in control of translational fidelity.

Functionally, one of the primary rRNA binding proteins, it binds directly to 16S rRNA where it nucleates assembly of the body of the 30S subunit. In terms of biological role, with S5 and S12 plays an important role in translational accuracy. This chain is Small ribosomal subunit protein uS4, found in Prochlorococcus marinus (strain AS9601).